Consider the following 292-residue polypeptide: MAAHKITTTLSIFFLLSSIFRSSDAAGIAIYWGQNGNEGSLASTCATGNYEFVNIAFLSSFGSGQAPVLNLAGHCNPDNNGCAFLSDEINSCKSQNVKVLLSIGGGAGSYSLSSADDAKQVANFIWNSYLGGQSDSRPLGAAVLDGVDFDIESGSGQFWDVLAQELKNFGQVILSAAPQCPIPDAHLDAAIKTGLFDSVWVQFYNNPPCMFADNADNLLSSWNQWTAFPTSKLYMGLPAAREAAPSGGFIPADVLISQVLPTIKASSNYGGVMLWSKAFDNGYSDSIKGSIG.

Positions 1 to 25 are cleaved as a signal peptide; it reads MAAHKITTTLSIFFLLSSIFRSSDA. A GH18 domain is found at 26 to 292; it reads AGIAIYWGQN…YSDSIKGSIG (267 aa). Intrachain disulfides connect cysteine 45-cysteine 92 and cysteine 75-cysteine 82. The active-site Proton donor is the glutamate 152. Cysteine 180 and cysteine 209 are oxidised to a cystine.

It belongs to the glycosyl hydrolase 18 family. Chitinase class II subfamily.

Its subcellular location is the secreted. The protein resides in the extracellular space. The catalysed reaction is Random endo-hydrolysis of N-acetyl-beta-D-glucosaminide (1-&gt;4)-beta-linkages in chitin and chitodextrins.. In terms of biological role, this protein functions as a defense against chitin containing fungal pathogens. The polypeptide is Acidic endochitinase (Cucumis sativus (Cucumber)).